Consider the following 345-residue polypeptide: Phosphoribosylformylglycinamidine cyclo-ligase (345 aa).

Belongs to the AIR synthase family.

The protein resides in the cytoplasm. The enzyme catalyses 2-formamido-N(1)-(5-O-phospho-beta-D-ribosyl)acetamidine + ATP = 5-amino-1-(5-phospho-beta-D-ribosyl)imidazole + ADP + phosphate + H(+). It participates in purine metabolism; IMP biosynthesis via de novo pathway; 5-amino-1-(5-phospho-D-ribosyl)imidazole from N(2)-formyl-N(1)-(5-phospho-D-ribosyl)glycinamide: step 2/2. This chain is Phosphoribosylformylglycinamidine cyclo-ligase, found in Cronobacter sakazakii (strain ATCC BAA-894) (Enterobacter sakazakii).